The following is a 485-amino-acid chain: Putative aldehyde dehydrogenase AldY (485 aa).

Residue 231–236 (GSTAVG) coordinates NAD(+). Residues E253 and C287 contribute to the active site.

Belongs to the aldehyde dehydrogenase family.

The catalysed reaction is an aldehyde + NAD(+) + H2O = a carboxylate + NADH + 2 H(+). May contribute to protect cells against stress due to ethanol and related compounds. The protein is Putative aldehyde dehydrogenase AldY (aldY) of Bacillus subtilis (strain 168).